The chain runs to 333 residues: Dipeptide transport system permease protein DppB (333 aa).

Transmembrane regions (helical) follow at residues 10–30 (LLLIPVLIGMTIVTFSIIHLI), 99–119 (IELTIFAMIFAIIIGVNAGIV), 130–150 (YLSMFIALVGVSMPIFWLALM), 197–217 (SIKHLILPGIALGTIPMAIIA), 256–276 (LIPVLTVVGLQTGNLLGGAIL), and 300–320 (PVIQSGILVVATIFVLINLFV). Residues 95 to 324 (LAATIELTIF…LINLFVDLLY (230 aa)) form the ABC transmembrane type-1 domain.

This sequence belongs to the binding-protein-dependent transport system permease family. OppBC subfamily.

Its subcellular location is the cell membrane. Its function is as follows. Probably part of the ABC transporter Dpp involved in dipeptide transport. Responsible for the translocation of the substrate across the membrane. In Alkalihalophilus pseudofirmus (strain ATCC BAA-2126 / JCM 17055 / OF4) (Bacillus pseudofirmus), this protein is Dipeptide transport system permease protein DppB (dppB).